The following is a 324-amino-acid chain: MKPSIILYKTLPDDLLHRLEAHFTVTQVPNLHPETVARHAQAFASAQGLLGTSETVNRALLEKMPALRAASTISVGYDNVEVDALTARKIVLMHTPTVLTETVADTVMALMLATARRVVDVAERVKAGEWTESIGPAWFGVDVHHKTLGIVGMGRIGMALAQRAHFGFTMPVLYHARRRHQEAEDRFNARYCDLDTLLQEADFVCVILPLTTETRHLFGTTQFARMKSSAIFINAGRGPVVDENALIAALQNGEIYAAGLDVFEHEPLSVDSPLLNMSNVVAVPHIGSATHETRYNMMACAVDNLIDALQGKIEKNCVNPQAAG.

Catalysis depends on residues Arg237 and Glu266. His285 functions as the Proton donor in the catalytic mechanism.

Belongs to the D-isomer specific 2-hydroxyacid dehydrogenase family. GhrB subfamily. As to quaternary structure, homodimer.

It is found in the cytoplasm. The catalysed reaction is glycolate + NADP(+) = glyoxylate + NADPH + H(+). The enzyme catalyses (R)-glycerate + NAD(+) = 3-hydroxypyruvate + NADH + H(+). It catalyses the reaction (R)-glycerate + NADP(+) = 3-hydroxypyruvate + NADPH + H(+). Functionally, catalyzes the NADPH-dependent reduction of glyoxylate and hydroxypyruvate into glycolate and glycerate, respectively. This Salmonella paratyphi B (strain ATCC BAA-1250 / SPB7) protein is Glyoxylate/hydroxypyruvate reductase B.